A 302-amino-acid polypeptide reads, in one-letter code: Zinc transporter ZIP1 (302 aa).

The Extracellular segment spans residues 1–6 (MDYLLQ). A helical transmembrane segment spans residues 7-27 (VKVGALVGLLLLTLFFGFIPA). Topologically, residues 28–44 (RMKWFHVTGGTELHKAV) are cytoplasmic. A helical membrane pass occupies residues 45-65 (LSFVSCFAGGVFLSACLLDII). The Extracellular segment spans residues 66–86 (PDYLSDIHGELQKRDLDDGFP). The helical transmembrane segment at 87–107 (LPEFIMACGFFTVLILEKMVL) threads the bilayer. The Cytoplasmic portion of the chain corresponds to 108-158 (SCTEGHRNEETAPLLAPAAPNGHAHGHPSVNDLEGSGHHVHVDFHAHSSFR). The helical transmembrane segment at 159 to 179 (SFMLFLSLSLHSVFEGLAIGL) threads the bilayer. At 180-185 (QTTNAK) the chain is on the extracellular side. The chain crosses the membrane as a helical span at residues 186–206 (VLEICIAILVHKSIIVFSLSV). The Cytoplasmic segment spans residues 207-219 (KLVQSAVKPLWVV). A helical membrane pass occupies residues 220–240 (LYVTVFAIMSPLGIGIGIVVI). The Extracellular segment spans residues 241-247 (ETERQAG). A helical membrane pass occupies residues 248 to 268 (GLIQAVLEGLAAGTFIYITFL). The Cytoplasmic segment spans residues 269-281 (EILPHELNSSERP). Residues 282 to 302 (LLKVLFLLCGFSIMAALCFLG) form a helical membrane-spanning segment.

Belongs to the ZIP transporter (TC 2.A.5) family. Ubiquitous. Highest levels in ovary, high levels in heart, eye, kidney and brain, moderate levels in intestine and low levels in gill and skin.

The protein resides in the cell membrane. Its subcellular location is the endoplasmic reticulum membrane. The catalysed reaction is Zn(2+)(in) = Zn(2+)(out). In terms of biological role, transporter for the divalent cation Zn(2+). Mediates the influx of Zn(2+) into cells from extracellular space. This is Zinc transporter ZIP1 (slc39a1) from Danio rerio (Zebrafish).